The sequence spans 156 residues: Transcription antitermination protein NusB (156 aa).

Belongs to the NusB family.

In terms of biological role, involved in transcription antitermination. Required for transcription of ribosomal RNA (rRNA) genes. Binds specifically to the boxA antiterminator sequence of the ribosomal RNA (rrn) operons. The protein is Transcription antitermination protein NusB of Bartonella quintana (strain Toulouse) (Rochalimaea quintana).